A 446-amino-acid polypeptide reads, in one-letter code: Phosphoglucosamine mutase (446 aa).

Residue S102 is the Phosphoserine intermediate of the active site. 4 residues coordinate Mg(2+): S102, D241, D243, and D245. Position 102 is a phosphoserine (S102).

Belongs to the phosphohexose mutase family. The cofactor is Mg(2+). Post-translationally, activated by phosphorylation.

The enzyme catalyses alpha-D-glucosamine 1-phosphate = D-glucosamine 6-phosphate. Functionally, catalyzes the conversion of glucosamine-6-phosphate to glucosamine-1-phosphate. The sequence is that of Phosphoglucosamine mutase from Xylella fastidiosa (strain M12).